The primary structure comprises 348 residues: Alcohol dehydrogenase 1 (348 aa).

Serine 2 is subject to N-acetylserine. Zn(2+) is bound at residue cysteine 44. Residues histidine 45, threonine 46, and histidine 49 each contribute to the NAD(+) site. The Zn(2+) site is built by histidine 67, glutamate 68, cysteine 98, cysteine 101, cysteine 104, cysteine 112, and cysteine 154. NAD(+) is bound by residues glycine 181, glycine 182, leucine 183, aspartate 202, and lysine 207. Serine 213 bears the Phosphoserine mark. Phenylalanine 222 serves as a coordination point for NAD(+). Threonine 223 carries the phosphothreonine modification. Residues lysine 226 and lysine 234 each participate in a glycyl lysine isopeptide (Lys-Gly) (interchain with G-Cter in ubiquitin) cross-link. Residues valine 269 and methionine 271 each contribute to the NAD(+) site. Position 279 is a phosphoserine (serine 279). Lysine 287 is covalently cross-linked (Glycyl lysine isopeptide (Lys-Gly) (interchain with G-Cter in ubiquitin)). Residues serine 294 and valine 296 each coordinate NAD(+). Serine 316 bears the Phosphoserine mark. Lysine 319 participates in a covalent cross-link: Glycyl lysine isopeptide (Lys-Gly) (interchain with G-Cter in ubiquitin). Arginine 341 is an NAD(+) binding site.

Belongs to the zinc-containing alcohol dehydrogenase family. Homotetramer. Requires Zn(2+) as cofactor.

It is found in the cytoplasm. The enzyme catalyses a primary alcohol + NAD(+) = an aldehyde + NADH + H(+). The catalysed reaction is a secondary alcohol + NAD(+) = a ketone + NADH + H(+). It carries out the reaction ethanol + NAD(+) = acetaldehyde + NADH + H(+). It catalyses the reaction allyl alcohol + NADP(+) = acrolein + NADPH + H(+). The enzyme catalyses 1-propanol + NAD(+) = propanal + NADH + H(+). The catalysed reaction is butan-1-ol + NAD(+) = butanal + NADH + H(+). It carries out the reaction hexan-1-ol + NAD(+) = hexanal + NADH + H(+). It catalyses the reaction (R)-lactaldehyde + NAD(+) = methylglyoxal + NADH + H(+). The enzyme catalyses octan-1-ol + NAD(+) = octanal + NADH + H(+). The catalysed reaction is butan-2-ol + NAD(+) = butan-2-one + NADH + H(+). It carries out the reaction propan-2-ol + NAD(+) = acetone + NADH + H(+). It catalyses the reaction isobutanol + NAD(+) = 2-methylpropanal + NADH + H(+). In terms of biological role, preferentially fermentative isozyme that reduces acetaldehyde to ethanol during the fermentation of glucose. Major enzyme required for the conversion of acetaldehyde to ethanol. Plays a key role in the carbohydrate metabolism through the regeneration of NAD(+) from glycolytic NADH. In the reverse reaction, preferentially catalyzes the conversion of primary unbranched alcohols to their corresponding aldehydes. Also shows activity toward secondary alcohols. Most active with ethanol, and its activity decreases as the size of the alcohol is increased. In Saccharomyces cerevisiae (strain ATCC 204508 / S288c) (Baker's yeast), this protein is Alcohol dehydrogenase 1 (ADH1).